The chain runs to 199 residues: Dephospho-CoA kinase (199 aa).

Residues valine 4 to lysine 199 enclose the DPCK domain. Alanine 12–threonine 17 lines the ATP pocket.

Belongs to the CoaE family.

The protein localises to the cytoplasm. It catalyses the reaction 3'-dephospho-CoA + ATP = ADP + CoA + H(+). It participates in cofactor biosynthesis; coenzyme A biosynthesis; CoA from (R)-pantothenate: step 5/5. In terms of biological role, catalyzes the phosphorylation of the 3'-hydroxyl group of dephosphocoenzyme A to form coenzyme A. This Enterococcus faecalis (strain ATCC 700802 / V583) protein is Dephospho-CoA kinase.